The sequence spans 291 residues: Methyl-CpG-binding domain protein 3 (291 aa).

One can recognise an MBD domain in the interval 1–72 (MERKRWECPA…DFRTGKMLMS (72 aa)). The interval 1–80 (MERKRWECPA…MSKMNKSRQR (80 aa)) is required for interaction with MBD2. At S56 the chain carries Phosphoserine. Residues 60–80 (STFDFRTGKMLMSKMNKSRQR) form a required for interaction with MBD3L2 region. Residue K73 forms a Glycyl lysine isopeptide (Lys-Gly) (interchain with G-Cter in SUMO2) linkage. S85 carries the post-translational modification Phosphoserine. Residues K90 and K92 each participate in a glycyl lysine isopeptide (Lys-Gly) (interchain with G-Cter in SUMO2) cross-link. Phosphoserine is present on S144. Residues 216 to 245 (KAFMVTDEDIRKQEELVQQVRKRLEEALMA) adopt a coiled-coil conformation. The segment covering 254–267 (LARDGEAPLDKACA) has biased composition (basic and acidic residues). The tract at residues 254 to 291 (LARDGEAPLDKACAEDDDEEDEEEEEEEPDPDPEMEHV) is disordered. A compositionally biased stretch (acidic residues) spans 268 to 291 (EDDDEEDEEEEEEEPDPDPEMEHV).

In terms of assembly, heterodimer (via N-terminus) with MBD2. Component of the MeCP1 histone deacetylase complex. Component of the nucleosome remodeling and deacetylase (NuRD) repressor complex, composed of core proteins MTA1, MTA2, MTA3, RBBP4, RBBP7, HDAC1, HDAC2, MBD2, MBD3, and peripherally associated proteins CDK2AP1, CDK2AP2, GATAD2A, GATAD2B, CHD3, CHD4 and CHD5. The exact stoichiometry of the NuRD complex is unknown, and some subunits such as MBD2 and MBD3, GATAD2A and GATAD2B, and CHD3, CHD4 and CHD5 define mutually exclusive NuRD complexes. Interacts with MBD3L2 (via N-terminus); the interaction is direct. Interacts with BCL6. Interacts with CDK2AP1. Interacts with HDAC1. Interacts with MTA2. Interacts with DNMT1. Interacts with GATAD2A. Interacts with GATAD2B. Does not interact with PWWP2A. Does not interact with PWWP2B.

It localises to the nucleus. Its subcellular location is the chromosome. Acts as a component of the histone deacetylase NuRD complex which participates in the remodeling of chromatin. Acts as transcriptional repressor and plays a role in gene silencing. Does not bind to methylated DNA by itself. Binds to a lesser degree DNA containing unmethylated CpG dinucleotides. Recruits histone deacetylases and DNA methyltransferases. This is Methyl-CpG-binding domain protein 3 (MBD3) from Homo sapiens (Human).